We begin with the raw amino-acid sequence, 343 residues long: Polyprenal reductase 2 (343 aa).

Transmembrane regions (helical) follow at residues 12 to 32, 66 to 86, 164 to 184, 223 to 243, 266 to 286, and 291 to 311; these read GAWITVWIVSILPLVIASIPT, FAHFYVIGVVWTTLLLAATWM, MHILGYFAGLFFYVTAPLSLC, PLMKLGSLQWIGGAIFLWGWI, IIPYGDWFGMVSSPHFLAEIV, and LLIASGGTDITIWLLFGFVAA.

It belongs to the steroid 5-alpha reductase family. Polyprenal reductase subfamily. Expressed in roots, leaves, stems and flowers.

It localises to the endoplasmic reticulum membrane. It carries out the reaction a di-trans,poly-cis-dolichal + NADP(+) = a di-trans,poly-cis-polyprenal + NADPH + H(+). It functions in the pathway protein modification; protein glycosylation. In terms of biological role, plays a key role in early steps of protein N-linked glycosylation by being involved in the conversion of polyprenol into dolichol. Acts as a polyprenal reductase that mediates the reduction of polyprenal into dolichal in a NADP-dependent mechanism. Dolichols are required for the synthesis of dolichol-linked monosaccharides and the oligosaccharide precursor used for N-glycosylation. Involved in the regulation of plant growth and reproductive processes. In Arabidopsis thaliana (Mouse-ear cress), this protein is Polyprenal reductase 2.